The chain runs to 227 residues: Endo-1,4-beta-xylanase 11A (227 aa).

A signal peptide spans 1–36; the sequence is MVSASSLLLAASAIAGVFSAPAAAPVSENLNVLQER. A GH11 domain is found at 37-227; sequence ALTSSATGTS…SSGSASITVS (191 aa). Positions 112 to 136 are necrosis inducing domain; that stretch reads VYGWTTSPLIEYYIVEDFGTYDPSS. E122 serves as the catalytic Nucleophile. Catalysis depends on E214, which acts as the Proton donor.

It belongs to the glycosyl hydrolase 11 (cellulase G) family.

Its subcellular location is the secreted. The enzyme catalyses Endohydrolysis of (1-&gt;4)-beta-D-xylosidic linkages in xylans.. It functions in the pathway glycan degradation; xylan degradation. Its activity is regulated as follows. Significantly inhibited by the wheat xylanase inhibiting protein I (XIP-I) and the proteinaceous endoxylanase Triticum aestivum xylanase inhibitors I (TAXI-I), whereas no inhibition is detected with TAXI-II. In terms of biological role, endo-1,4-beta-xylanase involved in the hydrolysis of xylan, a major structural heterogeneous polysaccharide found in plant biomass representing the second most abundant polysaccharide in the biosphere, after cellulose. Required for plant infection and the appearance of secondary lesions. Is able to induce necrosis on leaves, seedling growth inhibition, induction of a ROS burst, electrolyte leakage, cytoplasm shrinkage, autofluorescence, cell death, and induction of defense genes, and this abilities are independent of the catalytic activity. Only exhibits elicitor activity in certain plants such as tomato, but not in N.benthamiana. In Botryotinia fuckeliana (strain B05.10) (Noble rot fungus), this protein is Endo-1,4-beta-xylanase 11A.